A 269-amino-acid chain; its full sequence is Regulatory protein RecX (269 aa).

Belongs to the RecX family.

The protein resides in the cytoplasm. Its function is as follows. Modulates RecA activity. This is Regulatory protein RecX from Lactococcus lactis subsp. cremoris (strain SK11).